A 423-amino-acid chain; its full sequence is Aspartate aminotransferase, mitochondrial (423 aa).

A mitochondrion-targeting transit peptide spans 1 to 22 (MALLQSRLLLSAPRRAAATARA). Residues glycine 58, tryptophan 155, and asparagine 208 each coordinate substrate. Lysine 272 is subject to N6-(pyridoxal phosphate)lysine. Substrate is bound at residue arginine 400.

The protein belongs to the class-I pyridoxal-phosphate-dependent aminotransferase family. Homodimer. Requires pyridoxal 5'-phosphate as cofactor. As to expression, detected in heart (at protein level).

Its subcellular location is the mitochondrion matrix. The catalysed reaction is L-aspartate + 2-oxoglutarate = oxaloacetate + L-glutamate. It carries out the reaction L-kynurenine + 2-oxoglutarate = kynurenate + L-glutamate + H2O. Functionally, catalyzes the irreversible transamination of the L-tryptophan metabolite L-kynurenine to form kynurenic acid (KA). As a member of the malate-aspartate shuttle, it has a key role in the intracellular NAD(H) redox balance. Is important for metabolite exchange between mitochondria and cytosol, and for amino acid metabolism. The sequence is that of Aspartate aminotransferase, mitochondrial (GOT2) from Gallus gallus (Chicken).